The following is a 118-amino-acid chain: Large ribosomal subunit protein bL19 (118 aa).

The protein belongs to the bacterial ribosomal protein bL19 family.

This protein is located at the 30S-50S ribosomal subunit interface and may play a role in the structure and function of the aminoacyl-tRNA binding site. This is Large ribosomal subunit protein bL19 (rplS) from Helicobacter pylori (strain J99 / ATCC 700824) (Campylobacter pylori J99).